The chain runs to 398 residues: Autophagy-related protein 39 (398 aa).

Positions 8 to 11 match the ATG8-binding motif; the sequence is WNLV. Residues 15 to 50 are disordered; the sequence is RLRKGREGEEQSSKSEISLDSLHESSFAGEDDEDFD. The ATG11-binding signature appears at 52-59; it reads DVLSNTSS. The chain crosses the membrane as a helical span at residues 148–164; the sequence is VIMLSSLLSMTFSYLAL.

As to quaternary structure, interacts with ATG8 and ATG11.

Its subcellular location is the endoplasmic reticulum membrane. The protein resides in the preautophagosomal structure membrane. Its function is as follows. Acts as a receptor for reticulophagy and nucleophagy. Directs autophagic sequestration of double-membrane vesicles derived from the nuclear envelope and perinuclear endoplasmic reticulum (pnER) into autophagosomes. Is not required for the cytoplasm-to-vacuole targeting pathway, mitophagy, pexophagy, and non-selective autophagy. This chain is Autophagy-related protein 39, found in Saccharomyces cerevisiae (strain ATCC 204508 / S288c) (Baker's yeast).